Consider the following 210-residue polypeptide: Somatotropin (210 aa).

An N-terminal signal peptide occupies residues 1-22 (MGQVFLLMPVLLVSCFLSQGAA). H38 lines the Zn(2+) pocket. C71 and C183 are joined by a disulfide. E192 contributes to the Zn(2+) binding site. C200 and C208 are oxidised to a cystine.

This sequence belongs to the somatotropin/prolactin family.

It localises to the secreted. In terms of biological role, growth hormone plays an important role in growth control and is involved in the regulation of several anabolic processes. Implicated as an osmoregulatory substance important for seawater adaptation. This Salmo salar (Atlantic salmon) protein is Somatotropin (gh).